The primary structure comprises 736 residues: Myosin-7 (736 aa).

The Myosin motor domain occupies 1–342; the sequence is NWMVTRINAT…LLGLLEEMRD (342 aa). Residues 219 to 241 are actin-binding; it reads LNKLMTNLRSTHPHFVRCIIPNE. The IQ domain occupies 345 to 374; sequence LSRIITRIQAQSRGVLSRMEYKKLLERRDS. Positions 403–736 form a coiled coil; it reads LLKSAETEKE…MNKKREAEFQ (334 aa). Ser701 is modified (phosphoserine). A disordered region spans residues 716 to 736; it reads EAGGATSVQIEMNKKREAEFQ. The span at 727–736 shows a compositional bias: basic and acidic residues; the sequence is MNKKREAEFQ.

Belongs to the TRAFAC class myosin-kinesin ATPase superfamily. Myosin family. As to quaternary structure, muscle myosin is a hexameric protein that consists of 2 heavy chain subunits (MHC), 2 alkali light chain subunits (MLC) and 2 regulatory light chain subunits (MLC-2). Interacts with ECPAS. Interacts (via C-terminus) with LRRC39.

The protein localises to the cytoplasm. Its subcellular location is the myofibril. The protein resides in the sarcomere. Functionally, myosins are actin-based motor molecules with ATPase activity essential for muscle contraction. Forms regular bipolar thick filaments that, together with actin thin filaments, constitute the fundamental contractile unit of skeletal and cardiac muscle. This chain is Myosin-7 (MYH7), found in Oryctolagus cuniculus (Rabbit).